Here is a 257-residue protein sequence, read N- to C-terminus: Enterotoxin type E (257 aa).

A signal peptide spans 1–27; sequence MKKTAFILLLFIALTLTTSPLVNGSEK. Residues C120 and C130 are joined by a disulfide bond. The Zn(2+) site is built by H211, H249, and D251.

This sequence belongs to the staphylococcal/streptococcal toxin family. As to quaternary structure, interacts with host MHC class II molecules composed of alpha/HLA-DRA and beta/HLA-DRB1 chains. Interacts with host T-cell receptor beta variable TRBV7-9. Zn(2+) is required as a cofactor.

It is found in the secreted. Staphylococcal enterotoxin that activates the host immune system by binding as unprocessed molecules to major histocompatibility (MHC) complex class II and T-cell receptor (TCR) molecules. In turn, this ternary complex activates a large number of T-lymphocytes initiating a systemic release of pro-inflammatory cytokines. Also causes the intoxication staphylococcal food poisoning syndrome. In Staphylococcus aureus, this protein is Enterotoxin type E (entE).